The primary structure comprises 301 residues: uncharacterized protein (301 aa).

Disordered regions lie at residues 167 to 186 (DVHL…PKER) and 225 to 244 (ASES…EGAS). The span at 170 to 181 (LNSTTPPHTAQV) shows a compositional bias: polar residues. Over residues 226–237 (SESSLETSSVSS) the composition is skewed to low complexity.

This is an uncharacterized protein from Mus musculus (Mouse).